The sequence spans 481 residues: Aspartyl/glutamyl-tRNA(Asn/Gln) amidotransferase subunit B (481 aa).

The protein belongs to the GatB/GatE family. GatB subfamily. Heterotrimer of A, B and C subunits.

The catalysed reaction is L-glutamyl-tRNA(Gln) + L-glutamine + ATP + H2O = L-glutaminyl-tRNA(Gln) + L-glutamate + ADP + phosphate + H(+). It carries out the reaction L-aspartyl-tRNA(Asn) + L-glutamine + ATP + H2O = L-asparaginyl-tRNA(Asn) + L-glutamate + ADP + phosphate + 2 H(+). Its function is as follows. Allows the formation of correctly charged Asn-tRNA(Asn) or Gln-tRNA(Gln) through the transamidation of misacylated Asp-tRNA(Asn) or Glu-tRNA(Gln) in organisms which lack either or both of asparaginyl-tRNA or glutaminyl-tRNA synthetases. The reaction takes place in the presence of glutamine and ATP through an activated phospho-Asp-tRNA(Asn) or phospho-Glu-tRNA(Gln). The chain is Aspartyl/glutamyl-tRNA(Asn/Gln) amidotransferase subunit B from Pseudomonas fluorescens (strain SBW25).